Reading from the N-terminus, the 350-residue chain is C5a anaphylatoxin chemotactic receptor 1 (350 aa).

The Extracellular portion of the chain corresponds to 1–37; that stretch reads MDSFDYTTPDYGHYDDKDTLDLNTPVDKTSNTLRVPD. The required for CHIPS binding stretch occupies residues 10-18; it reads DYGHYDDKD. Sulfotyrosine occurs at positions 11 and 14. The interval 21–30 is involved in C5a binding; the sequence is DLNTPVDKTS. The chain crosses the membrane as a helical span at residues 38-64; it reads ILALVIFAVVFLVGVLGNALVVWVTAF. The Cytoplasmic portion of the chain corresponds to 65-69; the sequence is EAKRT. A helical transmembrane segment spans residues 70-93; that stretch reads INAIWFLNLAVADFLSCLALPILF. The Extracellular segment spans residues 94–110; the sequence is TSIVQHHHWPFGGAACS. Cys-109 and Cys-188 are disulfide-bonded. A helical membrane pass occupies residues 111 to 132; sequence ILPSLILLNMYASILLLATISA. Over 133–153 the chain is Cytoplasmic; that stretch reads DRFLLVFKPIWCQNFRGAGLA. A helical membrane pass occupies residues 154 to 174; sequence WIACAVAWGLALLLTIPSFLY. At 175–200 the chain is on the extracellular side; it reads RVVREEYFPPKVLCGVDYSHDKRRER. A helical membrane pass occupies residues 201–226; it reads AVAIVRLVLGFLWPLLTLMICYTFIL. Over 227-242 the chain is Cytoplasmic; sequence LRTWSRRATRSTKTLK. Residues 243 to 265 traverse the membrane as a helical segment; that stretch reads VVVAVVASFFIFWLPYQVTGIMM. Topologically, residues 266–282 are extracellular; the sequence is SFLEPSSPTFRLLKKLD. Residues 283-303 form a helical membrane-spanning segment; that stretch reads SLCVSFAYINCCINPIIYVVA. At 304 to 350 the chain is on the cytoplasmic side; sequence GQGFQGRLQKSLPSLLRNVLTEESVVRESKSFARSTVDTMADKTQAV. A phosphoserine mark is found at Ser-314, Ser-317, Ser-327, Ser-332, Ser-334, and Ser-338.

This sequence belongs to the G-protein coupled receptor 1 family. In terms of assembly, homodimer. May also form higher-order oligomers. Interacts (when phosphorylated) with ARRB1 and ARRB2; the interaction is associated with internalization of C5aR. Interacts (via N-terminal domain) with S.aureus chemotaxis inhibitory protein (CHIPS); the interaction blocks the receptor and may thus inhibit the immune response. In terms of processing, sulfation plays a critical role in the association of C5aR with C5a, but no significant role in the ability of the receptor to transduce a signal and mobilize calcium in response to a small peptide agonist. Sulfation at Tyr-14 is important for CHIPS binding. Phosphorylated on serine residues in response to C5a binding, resulting in internalization of the receptor and short-term desensitization to C5a.

The protein localises to the cell membrane. The protein resides in the cytoplasmic vesicle. Its function is as follows. Receptor for the chemotactic and inflammatory peptide anaphylatoxin C5a. The ligand interacts with at least two sites on the receptor: a high-affinity site on the extracellular N-terminus, and a second site in the transmembrane region which activates downstream signaling events. Receptor activation stimulates chemotaxis, granule enzyme release, intracellular calcium release and superoxide anion production. The sequence is that of C5a anaphylatoxin chemotactic receptor 1 (C5AR1) from Pan troglodytes (Chimpanzee).